The chain runs to 166 residues: UPF0251 protein UNCMA_27150 (166 aa).

This sequence belongs to the UPF0251 family.

The chain is UPF0251 protein UNCMA_27150 from Methanocella arvoryzae (strain DSM 22066 / NBRC 105507 / MRE50).